The following is a 115-amino-acid chain: NADH-ubiquinone oxidoreductase chain 3 (115 aa).

A run of 3 helical transmembrane segments spans residues 4–24, 55–75, and 87–107; these read LLVL…AFWL, FFLV…LLPL, and MTLT…YEWL.

It belongs to the complex I subunit 3 family. In terms of assembly, core subunit of respiratory chain NADH dehydrogenase (Complex I) which is composed of 45 different subunits. Interacts with TMEM186. Interacts with TMEM242.

It is found in the mitochondrion inner membrane. It carries out the reaction a ubiquinone + NADH + 5 H(+)(in) = a ubiquinol + NAD(+) + 4 H(+)(out). Functionally, core subunit of the mitochondrial membrane respiratory chain NADH dehydrogenase (Complex I) which catalyzes electron transfer from NADH through the respiratory chain, using ubiquinone as an electron acceptor. Essential for the catalytic activity of complex I. This chain is NADH-ubiquinone oxidoreductase chain 3, found in Peromyscus eremicus (Cactus mouse).